The chain runs to 215 residues: MOB kinase activator-like 1A (215 aa).

Residues 1–29 (MSLFGLGSRNQKTFRPKKSAPTGSKGAQL) form a disordered region. Cys80, Cys85, His162, and His167 together coordinate Zn(2+).

It belongs to the MOB1/phocein family. As to expression, isoform 1 is constitutively expressed. Isoform 2 is specifically expressed in flowers bud during sporogenesis and gametogenesis.

It is found in the cytoplasm. The protein localises to the cytoskeleton. Its subcellular location is the phragmoplast. The polypeptide is MOB kinase activator-like 1A (Medicago sativa subsp. falcata (Sickle medic)).